A 398-amino-acid polypeptide reads, in one-letter code: CCA-adding enzyme (398 aa).

Residues G32 and R35 each contribute to the ATP site. CTP contacts are provided by G32 and R35. Mg(2+) is bound by residues D45 and D47. 5 residues coordinate ATP: R116, D159, R162, R165, and R168. R116, D159, R162, R165, and R168 together coordinate CTP.

The protein belongs to the tRNA nucleotidyltransferase/poly(A) polymerase family. Bacterial CCA-adding enzyme type 3 subfamily. Homodimer. Mg(2+) is required as a cofactor.

The enzyme catalyses a tRNA precursor + 2 CTP + ATP = a tRNA with a 3' CCA end + 3 diphosphate. It carries out the reaction a tRNA with a 3' CCA end + 2 CTP + ATP = a tRNA with a 3' CCACCA end + 3 diphosphate. In terms of biological role, catalyzes the addition and repair of the essential 3'-terminal CCA sequence in tRNAs without using a nucleic acid template. Adds these three nucleotides in the order of C, C, and A to the tRNA nucleotide-73, using CTP and ATP as substrates and producing inorganic pyrophosphate. tRNA 3'-terminal CCA addition is required both for tRNA processing and repair. Also involved in tRNA surveillance by mediating tandem CCA addition to generate a CCACCA at the 3' terminus of unstable tRNAs. While stable tRNAs receive only 3'-terminal CCA, unstable tRNAs are marked with CCACCA and rapidly degraded. This is CCA-adding enzyme from Lactobacillus gasseri (strain ATCC 33323 / DSM 20243 / BCRC 14619 / CIP 102991 / JCM 1131 / KCTC 3163 / NCIMB 11718 / NCTC 13722 / AM63).